Consider the following 454-residue polypeptide: tRNA modification GTPase MnmE (454 aa).

(6S)-5-formyl-5,6,7,8-tetrahydrofolate-binding residues include R23, E80, and K120. In terms of domain architecture, TrmE-type G spans 216 to 377; the sequence is GMKVVIAGRP…LRNNLKQSMG (162 aa). Position 226 (N226) interacts with K(+). GTP-binding positions include 226–231, 245–251, 270–273, 335–338, and 358–360; these read NAGKSS, TDIAGTT, DTAG, NKAD, and SAR. S230 provides a ligand contact to Mg(2+). K(+)-binding residues include T245, I247, and T250. Position 251 (T251) interacts with Mg(2+). K454 provides a ligand contact to (6S)-5-formyl-5,6,7,8-tetrahydrofolate.

The protein belongs to the TRAFAC class TrmE-Era-EngA-EngB-Septin-like GTPase superfamily. TrmE GTPase family. In terms of assembly, homodimer. Heterotetramer of two MnmE and two MnmG subunits. It depends on K(+) as a cofactor.

It is found in the cytoplasm. Its function is as follows. Exhibits a very high intrinsic GTPase hydrolysis rate. Involved in the addition of a carboxymethylaminomethyl (cmnm) group at the wobble position (U34) of certain tRNAs, forming tRNA-cmnm(5)s(2)U34. In Salmonella paratyphi A (strain ATCC 9150 / SARB42), this protein is tRNA modification GTPase MnmE.